We begin with the raw amino-acid sequence, 94 residues long: Aspartyl/glutamyl-tRNA(Asn/Gln) amidotransferase subunit C (94 aa).

The protein belongs to the GatC family. In terms of assembly, heterotrimer of A, B and C subunits.

It carries out the reaction L-glutamyl-tRNA(Gln) + L-glutamine + ATP + H2O = L-glutaminyl-tRNA(Gln) + L-glutamate + ADP + phosphate + H(+). It catalyses the reaction L-aspartyl-tRNA(Asn) + L-glutamine + ATP + H2O = L-asparaginyl-tRNA(Asn) + L-glutamate + ADP + phosphate + 2 H(+). In terms of biological role, allows the formation of correctly charged Asn-tRNA(Asn) or Gln-tRNA(Gln) through the transamidation of misacylated Asp-tRNA(Asn) or Glu-tRNA(Gln) in organisms which lack either or both of asparaginyl-tRNA or glutaminyl-tRNA synthetases. The reaction takes place in the presence of glutamine and ATP through an activated phospho-Asp-tRNA(Asn) or phospho-Glu-tRNA(Gln). The polypeptide is Aspartyl/glutamyl-tRNA(Asn/Gln) amidotransferase subunit C (Desulfitobacterium hafniense (strain DSM 10664 / DCB-2)).